Consider the following 213-residue polypeptide: Small ribosomal subunit protein uS5 (213 aa).

Residues 1-41 are disordered; sequence MSGRERNGGRSAENNDKKERNERNGRNDRGGRNDRRNQQDE. The 64-residue stretch at 45–108 folds into the S5 DRBM domain; sequence FIERVVTINR…EEARKNFFRV (64 aa).

The protein belongs to the universal ribosomal protein uS5 family. Part of the 30S ribosomal subunit. Contacts proteins S4 and S8.

In terms of biological role, with S4 and S12 plays an important role in translational accuracy. Its function is as follows. Located at the back of the 30S subunit body where it stabilizes the conformation of the head with respect to the body. The sequence is that of Small ribosomal subunit protein uS5 from Corynebacterium jeikeium (strain K411).